A 381-amino-acid chain; its full sequence is MPFSNSHNTQKLRFPAEDEFPDLSSHNNHMAKVLTPELYAELRAKCTPSGFTLDDAIQTGVDNPGHPYIMTVGAVAGDEESYDVFKDLFDPIIEERHGGYQPSDEHKTDLNPDNLQGGDDLDPNYVLSSRVRTGRSIRGFCLPPHCSRGERRAIEKLAVEALSSLDGDLSGRYYALKSMTEAEQQQLIDDHFLFDKPVSPLLLASGMARDWPDARGIWHNDNKTFLVWINEEDHLRVISMQKGGNMKEVFTRFCTGLTQIETLFKSKNYEFMWNPHLGYILTCPSNLGTGLRAGVHIKLPHLGKHEKFSEVLKRLRLQKRGTGGVDTAAVGGVFDVSNADRLGFSEVELVQMVVDGVKLLIEMEQRLEQGQAIDDLMPAQK.

Ser-4 carries the phosphoserine modification. In terms of domain architecture, Phosphagen kinase N-terminal spans 11 to 98 (KLRFPAEDEF…FDPIIEERHG (88 aa)). Thr-35 carries the post-translational modification Phosphothreonine. Residue Lys-45 forms a Glycyl lysine isopeptide (Lys-Gly) (interchain with G-Cter in ubiquitin) linkage. Creatine is bound at residue Val-72. Basic and acidic residues predominate over residues 96–110 (RHGGYQPSDEHKTDL). The disordered stretch occupies residues 96 to 123 (RHGGYQPSDEHKTDLNPDNLQGGDDLDP). Lys-107 is covalently cross-linked (Glycyl lysine isopeptide (Lys-Gly) (interchain with G-Cter in ubiquitin)). Tyr-125 bears the Phosphotyrosine mark. Residues 125 to 367 (YVLSSRVRTG…KLLIEMEQRL (243 aa)) form the Phosphagen kinase C-terminal domain. ATP-binding positions include 128-132 (SSRVR), Arg-130, Arg-132, and His-191. An internal MTS-like signal region spans residues 130 to 138 (RVRTGRSIR). Ser-199 is modified (phosphoserine). Position 232 (Glu-232) interacts with creatine. Residue Arg-236 coordinates ATP. 3'-nitrotyrosine is present on Tyr-269. Ser-285 contacts creatine. Arg-292 provides a ligand contact to ATP. Residue Ser-309 is modified to Phosphoserine. ATP is bound by residues Arg-320, 320-325 (RGTGGV), and Asp-335. A Phosphothreonine modification is found at Thr-322. A Glycyl lysine isopeptide (Lys-Gly) (interchain with G-Cter in ubiquitin) cross-link involves residue Lys-381.

It belongs to the ATP:guanido phosphotransferase family. As to quaternary structure, dimer of identical or non-identical chains, which can be either B (brain type) or M (muscle type). With MM being the major form in skeletal muscle and myocardium, MB existing in myocardium, and BB existing in many tissues, especially brain. Interacts with SLC12A6 (via C-terminus); the interaction may be required for SLC12A6 potassium-chloride cotransport activity. In terms of processing, ubiquitinated by the ECS(ASB9) complex, leading to its degradation by the proteasome. As to expression, expressed in hippocampus and corpus callosum (at protein level).

It localises to the cytoplasm. It is found in the cytosol. The protein localises to the mitochondrion. Its subcellular location is the cell membrane. The catalysed reaction is creatine + ATP = N-phosphocreatine + ADP + H(+). In terms of biological role, reversibly catalyzes the transfer of phosphate between ATP and various phosphogens (e.g. creatine phosphate). Creatine kinase isoenzymes play a central role in energy transduction in tissues with large, fluctuating energy demands, such as skeletal muscle, heart, brain and spermatozoa. Acts as a key regulator of adaptive thermogenesis as part of the futile creatine cycle: localizes to the mitochondria of thermogenic fat cells and acts by mediating phosphorylation of creatine to initiate a futile cycle of creatine phosphorylation and dephosphorylation. During the futile creatine cycle, creatine and N-phosphocreatine are in a futile cycle, which dissipates the high energy charge of N-phosphocreatine as heat without performing any mechanical or chemical work. The protein is Creatine kinase B-type of Mus musculus (Mouse).